The chain runs to 247 residues: MANPIEQFKIQPLVPLKVGSVDISFTNSSAMMVLSICLITLFLTLSVRSRALVPGRWQSMAEVFYEFIAGMLRDNVGQEGRKYFPFIFSLFMFVLFGNLLGMMPIPVIGFTYTSHVIVTFAMALVVFVGVTVIGFARHGTHYLRMFFPHGAPIATAVILIPIELISYFSRPFSLAVRLFANMTVGHIILKVMGGFVVSLGAFYLIPGAVPFAFLSAITVLEFGIALLQAYVFTILSCIYLHDAIHMH.

A run of 6 helical transmembrane segments spans residues 23-43, 90-110, 116-136, 145-165, 194-214, and 215-235; these read ISFT…TLFL, LFMF…VIGF, VIVT…IGFA, MFFP…IELI, GFVV…FAFL, and SAIT…FTIL.

The protein belongs to the ATPase A chain family. As to quaternary structure, F-type ATPases have 2 components, CF(1) - the catalytic core - and CF(0) - the membrane proton channel. CF(1) has five subunits: alpha(3), beta(3), gamma(1), delta(1), epsilon(1). CF(0) has three main subunits: a(1), b(2) and c(9-12). The alpha and beta chains form an alternating ring which encloses part of the gamma chain. CF(1) is attached to CF(0) by a central stalk formed by the gamma and epsilon chains, while a peripheral stalk is formed by the delta and b chains.

The protein localises to the cell inner membrane. Key component of the proton channel; it plays a direct role in the translocation of protons across the membrane. In Paramagnetospirillum magneticum (strain ATCC 700264 / AMB-1) (Magnetospirillum magneticum), this protein is ATP synthase subunit a.